A 398-amino-acid polypeptide reads, in one-letter code: E3 ubiquitin-protein ligase MARCHF11 (398 aa).

Residues 1–14 (MSDEGSKRGSRADS) show a composition bias toward basic and acidic residues. The segment at 1–158 (MSDEGSKRGS…GSGDQRSGHQ (158 aa)) is disordered. The segment covering 19–31 (PPLPPPPPPPPPG) has biased composition (pro residues). 2 stretches are compositionally biased toward basic and acidic residues: residues 94–104 (EGPRRLPEVKL) and 121–130 (ACREGERRGT). The RING-CH-type zinc-finger motif lies at 158–218 (QHQHHQPICK…ELCCYRYHVT (61 aa)). Cys-166, Cys-169, Cys-182, Cys-184, His-192, Cys-195, Cys-208, and Cys-211 together coordinate Zn(2+). A run of 2 helical transmembrane segments spans residues 241 to 261 (MIAV…LLWS) and 274 to 294 (ILFQ…IGLI). A YXXL motif motif is present at residues 367–370 (YVLL). Residues 395 to 398 (VTSV) carry the PDZ-binding motif.

In terms of assembly, interacts (YXXL motif) with AP1M1. Interacts (via PDZ-binding motif) with LIN7A. Interacts with unidentified fucose glycoproteins. As to expression, predominantly expressed in testis. Present in early developing spermatids. Not present in spermatogonia, spermatocytes or somatic cells (i.e. peritubular, Leydig, and Sertoli cells). Present in early round spermatids at step 4, remains until step 11, then it decreases at steps 12-15, and diminishes after step 16 (at protein level). Also expressed at lower level in brain.

The protein localises to the cytoplasmic vesicle membrane. It carries out the reaction S-ubiquitinyl-[E2 ubiquitin-conjugating enzyme]-L-cysteine + [acceptor protein]-L-lysine = [E2 ubiquitin-conjugating enzyme]-L-cysteine + N(6)-ubiquitinyl-[acceptor protein]-L-lysine.. Its pathway is protein modification; protein ubiquitination. Its function is as follows. E3 ubiquitin-protein ligase that mediates polyubiquitination of CD4. E3 ubiquitin ligases accept ubiquitin from an E2 ubiquitin-conjugating enzyme in the form of a thioester and then directly transfer the ubiquitin to targeted substrates. May play a role in ubuquitin-dependent protein sorting in developmenting spermatids. In Rattus norvegicus (Rat), this protein is E3 ubiquitin-protein ligase MARCHF11 (Marchf11).